The following is an 859-amino-acid chain: Ubiquitin carboxyl-terminal hydrolase 23 (859 aa).

Residues 1–24 (MEVATSSTEITIQTDRDPSSNNNG) show a composition bias toward polar residues. The segment at 1-26 (MEVATSSTEITIQTDRDPSSNNNGSC) is disordered. Residues 107 to 410 (AGLQNLGNTC…KAYMLFYVRD (304 aa)) enclose the USP domain. Catalysis depends on C116, which acts as the Nucleophile. The active-site Proton acceptor is H369. Disordered stretches follow at residues 722–749 (MISS…ASQN) and 822–859 (EESY…AYRI).

This sequence belongs to the peptidase C19 family.

It carries out the reaction Thiol-dependent hydrolysis of ester, thioester, amide, peptide and isopeptide bonds formed by the C-terminal Gly of ubiquitin (a 76-residue protein attached to proteins as an intracellular targeting signal).. In terms of biological role, recognizes and hydrolyzes the peptide bond at the C-terminal Gly of ubiquitin. Involved in the processing of poly-ubiquitin precursors as well as that of ubiquitinated proteins. This chain is Ubiquitin carboxyl-terminal hydrolase 23 (UBP23), found in Arabidopsis thaliana (Mouse-ear cress).